Here is a 119-residue protein sequence, read N- to C-terminus: ATP-dependent Clp protease adapter protein ClpS (119 aa).

The tract at residues 1-33 is disordered; sequence MATRIPKTPSTPPAQKPAGDDGDSVVLERRPQK.

It belongs to the ClpS family. In terms of assembly, binds to the N-terminal domain of the chaperone ClpA.

Functionally, involved in the modulation of the specificity of the ClpAP-mediated ATP-dependent protein degradation. The polypeptide is ATP-dependent Clp protease adapter protein ClpS (Variovorax paradoxus (strain S110)).